The chain runs to 348 residues: Phenylalanine--tRNA ligase alpha subunit (348 aa).

Glu259 contacts Mg(2+).

It belongs to the class-II aminoacyl-tRNA synthetase family. Phe-tRNA synthetase alpha subunit type 1 subfamily. As to quaternary structure, tetramer of two alpha and two beta subunits. It depends on Mg(2+) as a cofactor.

The protein resides in the cytoplasm. The enzyme catalyses tRNA(Phe) + L-phenylalanine + ATP = L-phenylalanyl-tRNA(Phe) + AMP + diphosphate + H(+). This is Phenylalanine--tRNA ligase alpha subunit from Lacticaseibacillus paracasei (strain ATCC 334 / BCRC 17002 / CCUG 31169 / CIP 107868 / KCTC 3260 / NRRL B-441) (Lactobacillus paracasei).